Consider the following 95-residue polypeptide: Alpha-bungarotoxin, isoform A31 (95 aa).

The first 21 residues, 1–21 (MKTLLLTLVVVTIVCLDLGYT), serve as a signal peptide directing secretion. 5 cysteine pairs are disulfide-bonded: C24–C44, C37–C65, C50–C54, C69–C80, and C81–C86.

This sequence belongs to the three-finger toxin family. Long-chain subfamily. Type II alpha-neurotoxin sub-subfamily. In terms of assembly, monomer in solution, homodimer in crystal state. As to expression, expressed by the venom gland.

It is found in the secreted. Functionally, binds with high affinity to muscular (tested on Torpedo marmorata, Kd=0.4 nM) and neuronal (tested on chimeric alpha-7/CHRNA7, Kd=0.95 nM) nicotinic acetylcholine receptor (nAChR) and inhibits acetylcholine from binding to the receptor, thereby impairing neuromuscular and neuronal transmission. It also shows an activity on GABA(A) receptors. It antagonises GABA-activated currents with high potency when tested on primary hippocampal neurons. It inhibits recombinantly expressed GABA(A) receptors composed of alpha-2-beta-2-gamma-2 (GABRA2-GABRB2-GABRG2) subunits with high potency (62.3% inhibition at 20 uM of toxin). It also shows a weaker inhibition on GABA(A) receptors composed of alpha-1-beta-2-gamma-2 (GABRA1-GABRB2-GABRG2) subunits, alpha-4-beta-2-gamma-2 (GABRA4-GABRB2-GABRG2) subunits, and alpha-5-beta-2-gamma-2 (GABRA5-GABRB2-GABRG2) subunits. A very weak inhibition is also observed on GABA(A) receptor composed of alpha-1-beta-3-gamma-2 (GABRA1-GABRB3-GABRG2). It has also been shown to bind and inhibit recombinant GABA(A) receptor beta-3/GABRB3 subunit (Kd=about 50 nM). In addition, it blocks the extracellular increase of dopamine evoked by nicotine only at the higher dose (4.2 uM). In vivo, when intraperitoneally injected into mice, induces flaccid paralysis of the limbs and respiratory distress, and causes death in a dose-dependent manner. This is Alpha-bungarotoxin, isoform A31 from Bungarus candidus (Malayan krait).